A 304-amino-acid polypeptide reads, in one-letter code: Phosphoribosylaminoimidazole-succinocarboxamide synthase (304 aa).

The protein belongs to the SAICAR synthetase family.

The enzyme catalyses 5-amino-1-(5-phospho-D-ribosyl)imidazole-4-carboxylate + L-aspartate + ATP = (2S)-2-[5-amino-1-(5-phospho-beta-D-ribosyl)imidazole-4-carboxamido]succinate + ADP + phosphate + 2 H(+). It participates in purine metabolism; IMP biosynthesis via de novo pathway; 5-amino-1-(5-phospho-D-ribosyl)imidazole-4-carboxamide from 5-amino-1-(5-phospho-D-ribosyl)imidazole-4-carboxylate: step 1/2. This is Phosphoribosylaminoimidazole-succinocarboxamide synthase from Streptomyces griseus subsp. griseus (strain JCM 4626 / CBS 651.72 / NBRC 13350 / KCC S-0626 / ISP 5235).